The primary structure comprises 442 residues: F-box/kelch-repeat protein OR23 (442 aa).

One can recognise an F-box domain in the interval 37–84 (TLIPGLSNDVGRLILSFVPYPHISRIKSTCKSWYAFLSSKTLISLRHS). Kelch repeat units lie at residues 93–139 (LSHL…NFVA), 145–200 (YVYV…AMPG), 204–257 (RIIV…LVEN), 269–328 (EFWV…KIVA), 330–377 (DCGK…ALNG), and 390–437 (LMDT…TTVM).

The protein is F-box/kelch-repeat protein OR23 (OR23) of Arabidopsis thaliana (Mouse-ear cress).